Here is an 864-residue protein sequence, read N- to C-terminus: Alanine--tRNA ligase (864 aa).

4 residues coordinate Zn(2+): H534, H538, C639, and H643.

It belongs to the class-II aminoacyl-tRNA synthetase family. Requires Zn(2+) as cofactor.

It localises to the cytoplasm. It carries out the reaction tRNA(Ala) + L-alanine + ATP = L-alanyl-tRNA(Ala) + AMP + diphosphate. Functionally, catalyzes the attachment of alanine to tRNA(Ala) in a two-step reaction: alanine is first activated by ATP to form Ala-AMP and then transferred to the acceptor end of tRNA(Ala). Also edits incorrectly charged Ser-tRNA(Ala) and Gly-tRNA(Ala) via its editing domain. This chain is Alanine--tRNA ligase, found in Onion yellows phytoplasma (strain OY-M).